A 169-amino-acid polypeptide reads, in one-letter code: NADH-quinone oxidoreductase subunit B (169 aa).

Residues cysteine 42, cysteine 43, cysteine 107, and cysteine 136 each contribute to the [4Fe-4S] cluster site.

The protein belongs to the complex I 20 kDa subunit family. In terms of assembly, NDH-1 is composed of 14 different subunits. Subunits NuoB, C, D, E, F, and G constitute the peripheral sector of the complex. [4Fe-4S] cluster serves as cofactor.

Its subcellular location is the cell inner membrane. The catalysed reaction is a quinone + NADH + 5 H(+)(in) = a quinol + NAD(+) + 4 H(+)(out). Its function is as follows. NDH-1 shuttles electrons from NADH, via FMN and iron-sulfur (Fe-S) centers, to quinones in the respiratory chain. The immediate electron acceptor for the enzyme in this species is believed to be ubiquinone. Couples the redox reaction to proton translocation (for every two electrons transferred, four hydrogen ions are translocated across the cytoplasmic membrane), and thus conserves the redox energy in a proton gradient. This is NADH-quinone oxidoreductase subunit B from Nitratiruptor sp. (strain SB155-2).